Reading from the N-terminus, the 61-residue chain is AHRITEECTYCAACEPECPVNAISAGDEIYIVDESVCTDCEGYYDEPACVAVCPVDCIIKV.

4Fe-4S ferredoxin-type domains follow at residues 2-27 (HRITEECTYCAACEPECPVNAISAGD) and 28-61 (EIYIVDESVCTDCEGYYDEPACVAVCPVDCIIKV). 8 residues coordinate [4Fe-4S] cluster: C8, C11, C14, C18, C37, C40, C49, and C53.

The cofactor is [4Fe-4S] cluster.

Ferredoxins are iron-sulfur proteins that transfer electrons in a wide variety of metabolic reactions. In Chlorobium limicola, this protein is Ferredoxin-2.